A 153-amino-acid polypeptide reads, in one-letter code: Protein ElaA (153 aa).

The N-acetyltransferase domain maps to 7-151 (LHHSELSVSQ…PHIGMAREVI (145 aa)).

This sequence belongs to the UPF0039 (ElaA) family.

This chain is Protein ElaA (elaA), found in Escherichia coli (strain K12).